Consider the following 183-residue polypeptide: uncharacterized protein (183 aa).

This is an uncharacterized protein from Acanthamoeba polyphaga mimivirus (APMV).